We begin with the raw amino-acid sequence, 187 residues long: Probable DNA endonuclease SmrA (187 aa).

The 82-residue stretch at 88–169 (LNLLRQPVEE…GSGACYVALR (82 aa)) folds into the Smr domain.

Functionally, has DNA endonuclease activity. Binds DNA. The protein is Probable DNA endonuclease SmrA (smrA) of Escherichia coli (strain K12).